An 823-amino-acid chain; its full sequence is MNVRVRHFMQSLDSRYQHKTVEEECNAAWDEHKIYKWKGNVAQSFVIDTPPPTVSGVLHMGHVFSYCHTDFIARYQRMAGKDVFYPIGFDDNGLPTERLVEKIKKLRAVQLERAEFTKMCREVSHEFRTKFRNLFRRLGISYDWALEYHTVSEEVQRLSQASFLDLYAKDKLYRKQQPILWDTVDCTAIAHAEVEELDLHSHLNTISFHTVGGEKIDIATTRPELIPACVALFFNPEDDRYTHLHGQFAVVPVGGHKVKILPDDKVRIDKGTGLVMCCTFGDETDVYWWRTHNLDTKTIVSRTGHIVDLAEDTPDAKIPAAQFDGMHVQKARKAVCDALEGAGLLVSQEPIVHTVKCAERSGAPIEILLSHQWFVRVMEHKHELLEQVQKVQWHPDSMRKRMEIWIENLNWDWCISRQRYFGVPFPVWYSKREGEVGKVLLPDVRDLPVDPLRDLPSGYGRDEVEPDVDVMDTWATSSISPQFLTKSVGQVLRNENLEPLFPTDLRAQSHEIIRSWAFYTMLKSYYHNGEIPWQNIMISGWCLAEDKTKMSKSKGNAMDPESTLDLYGADSVRYWAAKSRLGADTVFSEEVLKTGRRLTTKLWNASKFVATFFLRDNPPAGTTAAPTDLWILSKLHKAVAHNTENLKLFEYCAALNRTEEFFWKDFCDNYLELVKHRAYNHGSAHGHASAVSTLHHTLKTLLLLFAPFLPYVTEAVYGTLFSGCIHAQEWPNADEIPYNASLEQHGDALIKIVEEVRKAKTHAQVSVKYPVELITIGGLATDFPESMLEDLKHMCCAEQIKLTAPDSTELEVAVTLAPTVSSN.

The 'HIGH' region motif lies at 52 to 62 (PTVSGVLHMGH). Residues 549–553 (KMSKS) carry the 'KMSKS' region motif. Lysine 552 is an ATP binding site.

The protein belongs to the class-I aminoacyl-tRNA synthetase family. ValS type 2 subfamily. In terms of assembly, monomer.

The protein localises to the cytoplasm. The enzyme catalyses tRNA(Val) + L-valine + ATP = L-valyl-tRNA(Val) + AMP + diphosphate. In terms of biological role, catalyzes the attachment of valine to tRNA(Val). As ValRS can inadvertently accommodate and process structurally similar amino acids such as threonine, to avoid such errors, it has a 'posttransfer' editing activity that hydrolyzes mischarged Thr-tRNA(Val) in a tRNA-dependent manner. The chain is Valine--tRNA ligase from Anaplasma marginale (strain St. Maries).